The chain runs to 396 residues: Probable sugar efflux transporter (396 aa).

Helical transmembrane passes span 15-35 (VVTL…PVGL), 50-70 (VGIM…PFML), 81-101 (LICL…SWSF), 103-123 (VLVI…SITA), 136-156 (AQAL…GLPL), 170-190 (FFAI…LLPL), 209-229 (PALM…YTAY), 246-266 (FATA…VIFG), 275-295 (ALVS…LPAA), 299-319 (IHLG…GLGM), 333-353 (VAMA…ALVG), and 364-384 (MIGY…IIIF).

This sequence belongs to the major facilitator superfamily. SotB (TC 2.A.1.2) family.

The protein localises to the cell inner membrane. Its function is as follows. Involved in the efflux of sugars. The physiological role may be the reduction of the intracellular concentration of toxic sugars or sugar metabolites. This chain is Probable sugar efflux transporter, found in Escherichia coli O6:K15:H31 (strain 536 / UPEC).